A 702-amino-acid chain; its full sequence is Polyribonucleotide nucleotidyltransferase (702 aa).

Mg(2+) is bound by residues aspartate 493 and aspartate 499. Residues 560–619 (PRLLTMRIDPERIRDVIGKGGATIRGLTEETGTNIDISDEGVVTIASADKAAAEEAKKRI) form the KH domain. The S1 motif domain maps to 629-697 (GKVYDGKVAK…RQGRIRLSMK (69 aa)).

Belongs to the polyribonucleotide nucleotidyltransferase family. As to quaternary structure, component of the RNA degradosome, which is a multiprotein complex involved in RNA processing and mRNA degradation. It depends on Mg(2+) as a cofactor.

The protein localises to the cytoplasm. The enzyme catalyses RNA(n+1) + phosphate = RNA(n) + a ribonucleoside 5'-diphosphate. Involved in mRNA degradation. Catalyzes the phosphorolysis of single-stranded polyribonucleotides processively in the 3'- to 5'-direction. The chain is Polyribonucleotide nucleotidyltransferase from Halorhodospira halophila (strain DSM 244 / SL1) (Ectothiorhodospira halophila (strain DSM 244 / SL1)).